Consider the following 159-residue polypeptide: Succinate dehydrogenase [ubiquinone] cytochrome b small subunit, mitochondrial (159 aa).

The transit peptide at 1–56 (MAVLWRLSAVCGAQGGRALLLRTPVVRPAHISAFLQDRPIPEWCGVQHIHLSPGHH) directs the protein to the mitochondrion. Residues 57–63 (SGSKAAS) are Mitochondrial matrix-facing. A helical membrane pass occupies residues 64-85 (LHWTSERVVSVLLLGLLPAAYL). At 86–90 (NPCSA) the chain is on the mitochondrial intermembrane side. The helical transmembrane segment at 91-111 (MDYSLAATLTLHGHWGLGQVV) threads the bilayer. Heme b is bound at residue His102. Over 112–120 (TDYVHGDAS) the chain is Mitochondrial matrix. Tyr114 is a binding site for a ubiquinone. Residues 121 to 142 (QKAAKAGLLALSALTFAGLCYF) form a helical membrane-spanning segment. Topologically, residues 143–159 (NYHDVGICKAVAMLWKL) are mitochondrial intermembrane.

This sequence belongs to the CybS family. As to quaternary structure, component of complex II composed of four subunits: the flavoprotein (FP) SDHA, iron-sulfur protein (IP) SDHB, and a cytochrome b560 composed of SDHC and SDHD.

Its subcellular location is the mitochondrion inner membrane. It functions in the pathway carbohydrate metabolism; tricarboxylic acid cycle. In terms of biological role, membrane-anchoring subunit of succinate dehydrogenase (SDH) that is involved in complex II of the mitochondrial electron transport chain and is responsible for transferring electrons from succinate to ubiquinone (coenzyme Q). SDH also oxidizes malate to the non-canonical enol form of oxaloacetate, enol-oxaloacetate. Enol-oxaloacetate, which is a potent inhibitor of the succinate dehydrogenase activity, is further isomerized into keto-oxaloacetate. The protein is Succinate dehydrogenase [ubiquinone] cytochrome b small subunit, mitochondrial (SDHD) of Pongo abelii (Sumatran orangutan).